We begin with the raw amino-acid sequence, 382 residues long: Gas vesicle protein C1 (382 aa).

A compositionally biased stretch (basic and acidic residues) spans 1-18 (MSVTDKRDEMSTARDKFA). The disordered stretch occupies residues 1 to 21 (MSVTDKRDEMSTARDKFAESQ). Tandem repeats lie at residues 22-60 (QEFE…TNTT), 61-92 (DAFH…REMQ), 93-130 (DAFE…NSTH), 131-168 (GAFE…IAVQ), 169-200 (DAFD…DATA), 201-240 (DAFA…ETTE), and 241-284 (DAFV…VSPD). The segment at 22–284 (QEFESYADEF…VEAEAEVSPD (263 aa)) is 7 X approximate tandem repeats. The segment covering 260–302 (GAAEAEAEPVEADADVEAEAEVSPDEAGGESAGTEEEETEPAE) has biased composition (acidic residues). The segment at 260–382 (GAAEAEAEPV…DVPLRPDDKT (123 aa)) is disordered. A compositionally biased stretch (low complexity) spans 303 to 316 (VETAAPEVEGSPAD). Residues 317–336 (TADEAEDTEAEEETEEEAPE) are compositionally biased toward acidic residues. Positions 365–382 (EYRDEYGEDVPLRPDDKT) are enriched in basic and acidic residues.

Belongs to the halobacterial gas vesicle GvpC family. As to quaternary structure, forms homodimers, interacts with GvpF1, GvpH1, GvpI1, GvpL1, GvpN1 and GvpO1 via its C-terminus (residues 329-382).

The protein resides in the gas vesicle. The protein localises to the cytoplasm. Functionally, confers stability, involved in shaping gas vesicles. Gas vesicles are hollow, gas filled proteinaceous nanostructures found in several microbial planktonic microorganisms. They allow positioning of halobacteria at the optimal depth for growth in the poorly aerated, shallow brine pools of their habitat. In terms of biological role, expression of a 9.5 kb p-vac DNA fragment containing 2 divergently transcribed regions (gvpD-gvpE-gvpF-gvpG-gvpH-gvpI-gvpJ-gvpK-gvpL-gvpM and gvpA-gvpC-gvpN-gvpO) allows H.volcanii to produce gas vesicles. A similar region restores gas vesicle production in H.halobium without the p-vac locus, but it still has the c-vac locus. The chain is Gas vesicle protein C1 (gvpC1) from Halobacterium salinarum (strain ATCC 700922 / JCM 11081 / NRC-1) (Halobacterium halobium).